A 62-amino-acid polypeptide reads, in one-letter code: Large ribosomal subunit protein uL30 (62 aa).

This sequence belongs to the universal ribosomal protein uL30 family. In terms of assembly, part of the 50S ribosomal subunit.

The protein is Large ribosomal subunit protein uL30 of Paracoccus denitrificans (strain Pd 1222).